Reading from the N-terminus, the 491-residue chain is N-succinylglutamate 5-semialdehyde dehydrogenase (491 aa).

NAD(+) is bound at residue Gly225–Gly230. Catalysis depends on residues Glu248 and Cys282.

The protein belongs to the aldehyde dehydrogenase family. AstD subfamily.

It catalyses the reaction N-succinyl-L-glutamate 5-semialdehyde + NAD(+) + H2O = N-succinyl-L-glutamate + NADH + 2 H(+). It functions in the pathway amino-acid degradation; L-arginine degradation via AST pathway; L-glutamate and succinate from L-arginine: step 4/5. Its function is as follows. Catalyzes the NAD-dependent reduction of succinylglutamate semialdehyde into succinylglutamate. This is N-succinylglutamate 5-semialdehyde dehydrogenase from Marinobacter nauticus (strain ATCC 700491 / DSM 11845 / VT8) (Marinobacter aquaeolei).